A 634-amino-acid chain; its full sequence is Threonine--tRNA ligase (634 aa).

Residues 1–61 form the TGS domain; that stretch reads MINIRFPDGS…NSNCELRLIT (61 aa). The interval 241-532 is catalytic; it reads DHRKIGKVLD…LIEHYAGNLP (292 aa). Zn(2+) contacts are provided by C332, H383, and H509.

The protein belongs to the class-II aminoacyl-tRNA synthetase family. Homodimer. Zn(2+) is required as a cofactor.

The protein localises to the cytoplasm. The enzyme catalyses tRNA(Thr) + L-threonine + ATP = L-threonyl-tRNA(Thr) + AMP + diphosphate + H(+). Its function is as follows. Catalyzes the attachment of threonine to tRNA(Thr) in a two-step reaction: L-threonine is first activated by ATP to form Thr-AMP and then transferred to the acceptor end of tRNA(Thr). Also edits incorrectly charged L-seryl-tRNA(Thr). This Francisella tularensis subsp. holarctica (strain FTNF002-00 / FTA) protein is Threonine--tRNA ligase.